We begin with the raw amino-acid sequence, 215 residues long: Pentapeptide repeat protein QnrB4 (215 aa).

2 Pentapeptide repeat domains span residues 25-104 and 117-191; these read TFFN…SFMN and ITNT…RGVD.

Belongs to the pentapeptide repeat protein family.

Probably plays a role in resistance to quinolone antibiotics. Only inhibits ATP-dependent DNA supercoiling by E.coli gyrase at high concentration (30 uM). Protects E.coli gyrase supercoiling activity from inhibition by fluoroquinolones (ciprofloxacin) at 0.1 uM, does not protect M.tuberculosis gyrase activity. The protein is Pentapeptide repeat protein QnrB4 of Escherichia coli.